Consider the following 383-residue polypeptide: MPHPSSRQAHLVLADGTVLTGDAFGHRGSVVGEVVFNTGMTGYQEVLTDPSYAGQLVTFTYPELGNTGVNGDDQEADHPHARGVIARQLAPCASNWRCSESLDNWMERHGLVGICGVDTRALVRRLRDGGAINGVISSDGRSPADLLAEVRHAPSMEGLNLASQVSTTEPYEWSSPCRVGFDQRLKQHPDLPYRVVAIDFGIKRAILDRLVAHGCAVTVLPSDADLDTVMSHQPEGVFLSNGPGDPAAVDSGIDLARSLLERANLPLFGICLGHQILGLALGGKTFKLGYGHRGLNHPCGTSGQVEITSQNHGFAISADSLPEPMVEVTHLNLNDRTVAAFQHRHQPVFGIQYHPEASPGPHDADHHFGRFVALMADRRDVGG.

The CPSase stretch occupies residues 1–190; that stretch reads MPHPSSRQAH…FDQRLKQHPD (190 aa). Ser51, Gly242, and Gly244 together coordinate L-glutamine. Residues 194-381 enclose the Glutamine amidotransferase type-1 domain; the sequence is RVVAIDFGIK…VALMADRRDV (188 aa). Cys271 acts as the Nucleophile in catalysis. Leu272, Gln275, Asn311, Gly313, and Phe314 together coordinate L-glutamine. Active-site residues include His354 and Glu356.

It belongs to the CarA family. Composed of two chains; the small (or glutamine) chain promotes the hydrolysis of glutamine to ammonia, which is used by the large (or ammonia) chain to synthesize carbamoyl phosphate. Tetramer of heterodimers (alpha,beta)4.

It carries out the reaction hydrogencarbonate + L-glutamine + 2 ATP + H2O = carbamoyl phosphate + L-glutamate + 2 ADP + phosphate + 2 H(+). The enzyme catalyses L-glutamine + H2O = L-glutamate + NH4(+). The protein operates within amino-acid biosynthesis; L-arginine biosynthesis; carbamoyl phosphate from bicarbonate: step 1/1. It participates in pyrimidine metabolism; UMP biosynthesis via de novo pathway; (S)-dihydroorotate from bicarbonate: step 1/3. In terms of biological role, small subunit of the glutamine-dependent carbamoyl phosphate synthetase (CPSase). CPSase catalyzes the formation of carbamoyl phosphate from the ammonia moiety of glutamine, carbonate, and phosphate donated by ATP, constituting the first step of 2 biosynthetic pathways, one leading to arginine and/or urea and the other to pyrimidine nucleotides. The small subunit (glutamine amidotransferase) binds and cleaves glutamine to supply the large subunit with the substrate ammonia. This chain is Carbamoyl phosphate synthase small chain, found in Parasynechococcus marenigrum (strain WH8102).